Reading from the N-terminus, the 256-residue chain is MKSIKRIGLCISLLILSIFVTSCDGDNKITGDSKETQIKKSFSKTLDMYPIKNLEDLYDKEGYRDGEFKKGDKGMWTIYTDFAKGNKSDELDDEGMVLNLDRNTRTAKGYYFVKKFYEKDKLPDRKNYKVEMKNNKIILLDKVEDPNLKKRIENFKFFGQYANFKDLENYNNGDVSINWNVPSYDVEYKMSNKDENVKQLRSRYNIPTEKAPMLKMHIDGDLKGSSVGYKRLEIDFSKEGRDISVIDYLSYKPAKK.

The first 22 residues, Met1 to Ser22, serve as a signal peptide directing secretion. Cys23 carries N-palmitoyl cysteine lipidation. A lipid anchor (S-diacylglycerol cysteine) is attached at Cys23.

This sequence belongs to the staphylococcal tandem lipoprotein family.

The protein resides in the cell membrane. This is an uncharacterized protein from Staphylococcus aureus (strain USA300).